The primary structure comprises 427 residues: 3-phosphoshikimate 1-carboxyvinyltransferase (427 aa).

The 3-phosphoshikimate site is built by K20, S21, and R25. K20 is a binding site for phosphoenolpyruvate. G92 and R120 together coordinate phosphoenolpyruvate. Residues S166, Q168, D312, and K339 each contribute to the 3-phosphoshikimate site. Position 168 (Q168) interacts with phosphoenolpyruvate. The active-site Proton acceptor is D312. Phosphoenolpyruvate-binding residues include R343 and R385.

The protein belongs to the EPSP synthase family. Monomer.

Its subcellular location is the cytoplasm. The catalysed reaction is 3-phosphoshikimate + phosphoenolpyruvate = 5-O-(1-carboxyvinyl)-3-phosphoshikimate + phosphate. The protein operates within metabolic intermediate biosynthesis; chorismate biosynthesis; chorismate from D-erythrose 4-phosphate and phosphoenolpyruvate: step 6/7. Its function is as follows. Catalyzes the transfer of the enolpyruvyl moiety of phosphoenolpyruvate (PEP) to the 5-hydroxyl of shikimate-3-phosphate (S3P) to produce enolpyruvyl shikimate-3-phosphate and inorganic phosphate. This chain is 3-phosphoshikimate 1-carboxyvinyltransferase, found in Streptococcus equi subsp. zooepidemicus (strain MGCS10565).